The following is an 89-amino-acid chain: Small ribosomal subunit protein uS15 (89 aa).

This sequence belongs to the universal ribosomal protein uS15 family. Part of the 30S ribosomal subunit. Forms a bridge to the 50S subunit in the 70S ribosome, contacting the 23S rRNA.

One of the primary rRNA binding proteins, it binds directly to 16S rRNA where it helps nucleate assembly of the platform of the 30S subunit by binding and bridging several RNA helices of the 16S rRNA. In terms of biological role, forms an intersubunit bridge (bridge B4) with the 23S rRNA of the 50S subunit in the ribosome. The sequence is that of Small ribosomal subunit protein uS15 from Haemophilus influenzae (strain PittGG).